A 135-amino-acid polypeptide reads, in one-letter code: uncharacterized protein (135 aa).

The region spanning 8 to 123 is the HotDog ACOT-type domain; sequence PKGKMVLRTL…IFVYVAVDEF (116 aa).

Belongs to the acyl coenzyme A hydrolase family.

This is an uncharacterized protein from Buchnera aphidicola subsp. Baizongia pistaciae (strain Bp).